The sequence spans 304 residues: Oxygen-dependent coproporphyrinogen-III oxidase (304 aa).

A substrate-binding site is contributed by Ser-93. Positions 97 and 107 each coordinate a divalent metal cation. The Proton donor role is filled by His-107. Residue 109–111 participates in substrate binding; sequence NVR. His-146 and His-176 together coordinate a divalent metal cation. The important for dimerization stretch occupies residues 241-276; it reads YVEFNLVYDRGTLFGLQSGGRTESILMSLPPQVRWG. Residue 259-261 coordinates substrate; that stretch reads GGR.

This sequence belongs to the aerobic coproporphyrinogen-III oxidase family. As to quaternary structure, homodimer. A divalent metal cation is required as a cofactor.

The protein resides in the cytoplasm. It catalyses the reaction coproporphyrinogen III + O2 + 2 H(+) = protoporphyrinogen IX + 2 CO2 + 2 H2O. The protein operates within porphyrin-containing compound metabolism; protoporphyrin-IX biosynthesis; protoporphyrinogen-IX from coproporphyrinogen-III (O2 route): step 1/1. In terms of biological role, involved in the heme biosynthesis. Catalyzes the aerobic oxidative decarboxylation of propionate groups of rings A and B of coproporphyrinogen-III to yield the vinyl groups in protoporphyrinogen-IX. This chain is Oxygen-dependent coproporphyrinogen-III oxidase, found in Pseudomonas syringae pv. tomato (strain ATCC BAA-871 / DC3000).